Reading from the N-terminus, the 630-residue chain is Mannosyl-oligosaccharide 1,2-alpha-mannosidase IC (630 aa).

At 1–22 (MLMRKVPGFVPASPWGLRLPQK) the chain is on the cytoplasmic side. The chain crosses the membrane as a helical; Signal-anchor for type II membrane protein span at residues 23-43 (FLFLLFLSGLVTLCFGALFLL). The Lumenal segment spans residues 44–630 (PHSSRLKRLF…DSSGRAWGRH (587 aa)). The tract at residues 74-140 (PAREQEPPPN…ASRPGDEGVP (67 aa)) is disordered. Positions 80 to 89 (PPPNPAPAAP) are enriched in pro residues. Over residues 102 to 113 (PRRRKGGLRRTR) the composition is skewed to basic residues. The residue at position 164 (Ser-164) is a Phosphoserine. The N-linked (GlcNAc...) asparagine glycan is linked to Asn-250. Cys-453 and Cys-485 form a disulfide bridge. The Proton donor role is filled by Glu-499. Thr-610 is a Ca(2+) binding site. Asn-618 carries N-linked (GlcNAc...) asparagine glycosylation.

Belongs to the glycosyl hydrolase 47 family. The cofactor is Ca(2+). In terms of tissue distribution, expressed in most tissues with the exception of lung, muscle and pancreas. Highly expressed in placenta.

Its subcellular location is the golgi apparatus membrane. The catalysed reaction is N(4)-(alpha-D-Man-(1-&gt;2)-alpha-D-Man-(1-&gt;2)-alpha-D-Man-(1-&gt;3)-[alpha-D-Man-(1-&gt;2)-alpha-D-Man-(1-&gt;3)-[alpha-D-Man-(1-&gt;2)-alpha-D-Man-(1-&gt;6)]-alpha-D-Man-(1-&gt;6)]-beta-D-Man-(1-&gt;4)-beta-D-GlcNAc-(1-&gt;4)-beta-D-GlcNAc)-L-asparaginyl-[protein] (N-glucan mannose isomer 9A1,2,3B1,2,3) + 4 H2O = N(4)-(alpha-D-Man-(1-&gt;3)-[alpha-D-Man-(1-&gt;3)-[alpha-D-Man-(1-&gt;6)]-alpha-D-Man-(1-&gt;6)]-beta-D-Man-(1-&gt;4)-beta-D-GlcNAc-(1-&gt;4)-beta-D-GlcNAc)-L-asparaginyl-[protein] (N-glucan mannose isomer 5A1,2) + 4 beta-D-mannose. The enzyme catalyses N(4)-(alpha-D-Man-(1-&gt;2)-alpha-D-Man-(1-&gt;2)-alpha-D-Man-(1-&gt;3)-[alpha-D-Man-(1-&gt;3)-[alpha-D-Man-(1-&gt;2)-alpha-D-Man-(1-&gt;6)]-alpha-D-Man-(1-&gt;6)]-beta-D-Man-(1-&gt;4)-beta-D-GlcNAc-(1-&gt;4)-beta-D-GlcNAc)-L-asparaginyl-[protein] (N-glucan mannose isomer 8A1,2,3B1,3) + 3 H2O = N(4)-(alpha-D-Man-(1-&gt;3)-[alpha-D-Man-(1-&gt;3)-[alpha-D-Man-(1-&gt;6)]-alpha-D-Man-(1-&gt;6)]-beta-D-Man-(1-&gt;4)-beta-D-GlcNAc-(1-&gt;4)-beta-D-GlcNAc)-L-asparaginyl-[protein] (N-glucan mannose isomer 5A1,2) + 3 beta-D-mannose. It functions in the pathway protein modification; protein glycosylation. With respect to regulation, inhibited by both 1-deoxymannojirimycin and kifunensine. In terms of biological role, involved in the maturation of Asn-linked oligosaccharides. Trim alpha-1,2-linked mannose residues from Man(9)GlcNAc(2) to produce first Man(8)GlcNAc(2) then Man(6)GlcNAc and a small amount of Man(5)GlcNAc. This Homo sapiens (Human) protein is Mannosyl-oligosaccharide 1,2-alpha-mannosidase IC (MAN1C1).